Consider the following 294-residue polypeptide: Elongation factor Ts (294 aa).

The tract at residues 78 to 81 (TDFV) is involved in Mg(2+) ion dislocation from EF-Tu.

Belongs to the EF-Ts family.

The protein localises to the cytoplasm. Its function is as follows. Associates with the EF-Tu.GDP complex and induces the exchange of GDP to GTP. It remains bound to the aminoacyl-tRNA.EF-Tu.GTP complex up to the GTP hydrolysis stage on the ribosome. This Mycoplasma mobile (strain ATCC 43663 / 163K / NCTC 11711) (Mesomycoplasma mobile) protein is Elongation factor Ts.